The following is a 488-amino-acid chain: Glutamyl-tRNA(Gln) amidotransferase subunit A (488 aa).

Catalysis depends on charge relay system residues Lys77 and Ser152. Ser176 acts as the Acyl-ester intermediate in catalysis.

This sequence belongs to the amidase family. GatA subfamily. As to quaternary structure, heterotrimer of A, B and C subunits.

It catalyses the reaction L-glutamyl-tRNA(Gln) + L-glutamine + ATP + H2O = L-glutaminyl-tRNA(Gln) + L-glutamate + ADP + phosphate + H(+). Its function is as follows. Allows the formation of correctly charged Gln-tRNA(Gln) through the transamidation of misacylated Glu-tRNA(Gln) in organisms which lack glutaminyl-tRNA synthetase. The reaction takes place in the presence of glutamine and ATP through an activated gamma-phospho-Glu-tRNA(Gln). The protein is Glutamyl-tRNA(Gln) amidotransferase subunit A of Streptococcus agalactiae serotype Ia (strain ATCC 27591 / A909 / CDC SS700).